A 334-amino-acid polypeptide reads, in one-letter code: AA9 family lytic polysaccharide monooxygenase A (334 aa).

The signal sequence occupies residues 1–22; sequence MSPSFKSTAILGAVALAARVRA. Histidine 23 and histidine 108 together coordinate Cu(2+). 2 disulfides stabilise this stretch: cysteine 78–cysteine 200 and cysteine 119–cysteine 123. A glycan (N-linked (GlcNAc...) asparagine) is linked at asparagine 160. Positions 186 and 195 each coordinate O2. Tyrosine 197 is a binding site for Cu(2+). N-linked (GlcNAc...) asparagine glycosylation occurs at asparagine 208. The interval 244-304 is disordered; the sequence is GPALYTGGSS…PSPSLPVEIP (61 aa). The span at 249 to 265 shows a compositional bias: low complexity; sequence TGGSSPSPNPPTSTQSP.

Belongs to the polysaccharide monooxygenase AA9 family. Requires Cu(2+) as cofactor.

The protein localises to the secreted. It catalyses the reaction [(1-&gt;4)-beta-D-glucosyl]n+m + reduced acceptor + O2 = 4-dehydro-beta-D-glucosyl-[(1-&gt;4)-beta-D-glucosyl]n-1 + [(1-&gt;4)-beta-D-glucosyl]m + acceptor + H2O.. Functionally, lytic polysaccharide monooxygenase (LPMO) that depolymerizes crystalline and amorphous polysaccharides via the oxidation of scissile alpha- or beta-(1-4)-glycosidic bonds, yielding C1 or C4 oxidation products. Catalysis by LPMOs requires the reduction of the active-site copper from Cu(II) to Cu(I) by a reducing agent and H(2)O(2) or O(2) as a cosubstrate. Active on hemicelluloses, including xylan, glucomannan, and xyloglucan. Shows clear activity on cellooligosaccharides, generating C4 oxidation products. Also displays activity on konjac glucomannan (KGM), a linear beta-1,4-linked mannan with randomly distributed glucosyl residues; as well as trace activity on lichenan, a linear beta-1,3-beta-1,4-glucan with a 1:2 ratio of beta-1,3 to beta-1,4 linkages. Has no activity on ivory nut mannan (INM), a linear beta-1,4-linked mannan without substitutions. In Malbranchea cinnamomea (Thermophilic fungus), this protein is AA9 family lytic polysaccharide monooxygenase A.